The following is a 419-amino-acid chain: GTPase Obg (419 aa).

An Obg domain is found at 1-158 (MHFVDEAFNE…FKIKTELKVL (158 aa)). In terms of domain architecture, OBG-type G spans 159-324 (ADIGLLGFPS…LKYKMSSFLQ (166 aa)). Residues 165 to 172 (GFPSVGKS), 190 to 194 (FTTIK), 211 to 214 (DLPG), 278 to 281 (NKMD), and 305 to 307 (SLV) contribute to the GTP site. 2 residues coordinate Mg(2+): Ser-172 and Thr-192. The 78-residue stretch at 342 to 419 (TLTDNLKTIS…KICDRLFDFL (78 aa)) folds into the OCT domain.

It belongs to the TRAFAC class OBG-HflX-like GTPase superfamily. OBG GTPase family. In terms of assembly, monomer. Mg(2+) serves as cofactor.

It is found in the cytoplasm. In terms of biological role, an essential GTPase which binds GTP, GDP and possibly (p)ppGpp with moderate affinity, with high nucleotide exchange rates and a fairly low GTP hydrolysis rate. Plays a role in control of the cell cycle, stress response, ribosome biogenesis and in those bacteria that undergo differentiation, in morphogenesis control. The protein is GTPase Obg of Aster yellows witches'-broom phytoplasma (strain AYWB).